The following is a 1181-amino-acid chain: Cellulose synthase-like protein D5 (1181 aa).

Positions 1–17 (MVKSAASQSPSPVTITV) are enriched in polar residues. 2 disordered regions span residues 1 to 70 (MVKS…DEGR) and 202 to 229 (KEPY…LPQM). A compositionally biased stretch (low complexity) spans 48–59 (SSRATRRTSISS). The segment covering 210–222 (DDPETEEEDEEDE) has biased composition (acidic residues). 2 helical membrane passes run 312–332 (AIIS…GLFL) and 343–363 (AMWL…SWLL). Asp443 is an active-site residue. Residues 497–542 (VRERRRVKREYDEFKVRINSLPEAIRRRSDAYNVHEELRAKKKQME) are a coiled coil. The active site involves Asp884. Helical transmembrane passes span 966–986 (LFLI…QFIV), 991–1011 (ITFL…SLLE), 1038–1058 (PAAV…SFTL), 1082–1102 (FLMV…AVGL), 1116–1136 (LVGG…FAKG), and 1146–1166 (TIVF…WVYI).

The protein belongs to the glycosyltransferase 2 family. Plant cellulose synthase-like D subfamily. Expressed in vascular tissues.

It localises to the golgi apparatus membrane. Involved in stem and root growth. Possesses xylan and homogalacturonan synthase activity. This chain is Cellulose synthase-like protein D5 (CSLD5), found in Arabidopsis thaliana (Mouse-ear cress).